A 700-amino-acid polypeptide reads, in one-letter code: Centrosomal protein of 63 kDa (700 aa).

At M1 the chain carries N-acetylmethionine. 2 coiled-coil regions span residues 73 to 283 (KEVG…ETFI) and 343 to 533 (LQAE…MCKK). A phosphoserine mark is found at S278, K488, and L492. The segment at 570 to 603 (QYKTGHHSPRGQTLDSIDPVARGPSPLSSHISPG) is disordered. Residues 593–603 (PSPLSSHISPG) show a composition bias toward low complexity.

Belongs to the CEP63 family. In terms of assembly, interacts with CEP152 and CDK1; these interactions recruit both ligands to centrosomes. Interacts with CDK2, CDK5RAP2, WDR62, CEP90, KIAA0753/moonraker and CCDC14. CEP63, CDK5RAP2, CEP152, WDR62 are proposed to form a stepwise assembled complex at the centrosome forming a ring near parental centrioles. Interacts with CCDC57; the interaction is required for their location to proximal end of centrioles. Interacts with FXR1; promoting its stabilization. Polyubiquitinated via 'Lys-48'-linked ubiquitin, leading to its degradation. Deubiquitinated by USP36, promoting its stabilization.

It is found in the cytoplasm. The protein localises to the cytoskeleton. Its subcellular location is the microtubule organizing center. It localises to the centrosome. The protein resides in the centriole. It is found in the centriolar satellite. Its function is as follows. Required for normal spindle assembly. Plays a key role in mother-centriole-dependent centriole duplication; the function also seems to involve CEP152, CDK5RAP2 and WDR62 through a stepwise assembled complex at the centrosome that recruits CDK2 required for centriole duplication. Reported to be required for centrosomal recruitment of CEP152; however, this function has been questioned. Also recruits CDK1 to centrosomes. Plays a role in DNA damage response. Following DNA damage, such as double-strand breaks (DSBs), is removed from centrosomes; this leads to the inactivation of spindle assembly and delay in mitotic progression. Promotes stabilization of FXR1 protein by inhibiting FXR1 ubiquitination. This chain is Centrosomal protein of 63 kDa, found in Mus musculus (Mouse).